Reading from the N-terminus, the 757-residue chain is Xylosyl- and glucuronyltransferase LARGE1 (757 aa).

The Cytoplasmic portion of the chain corresponds to 1 to 10 (MLGMCRGRRK). Residues 11 to 31 (FVAASLALIFIPALTWLYLSS) traverse the membrane as a helical; Signal-anchor for type II membrane protein segment. Residues 32-757 (ANITVKPLPL…LKYMTVDNNS (726 aa)) are Lumenal-facing. Residues 50-82 (AVVGAAAEHQSLELRLRDVEEHNNALRREISRT) adopt a coiled-coil conformation. The disordered stretch occupies residues 76 to 127 (RREISRTPRVPTHSSHPSSSRHGNQLHTHSTEEGTGDSEAKKGAAAGNSSDC). A compositionally biased stretch (low complexity) spans 82–97 (TPRVPTHSSHPSSSRH). N-linked (GlcNAc...) asparagine glycosylation is found at N123 and N149. The segment at 139–414 (IHIAIVCAGY…FLEYDGNLLR (276 aa)) is xylosyltransferase activity. Residues D243 and D245 each contribute to the Mn(2+) site. N-linked (GlcNAc...) asparagine glycosylation occurs at N273. A glucuronyltransferase activity region spans residues 415-757 (RELFGCPSET…LKYMTVDNNS (343 aa)). Positions 564 and 566 each coordinate Mn(2+). N738 is a glycosylation site (N-linked (GlcNAc...) asparagine).

The protein in the C-terminal section; belongs to the glycosyltransferase 49 family. This sequence in the N-terminal section; belongs to the glycosyltransferase 8 family. Mn(2+) serves as cofactor.

Its subcellular location is the golgi apparatus membrane. It carries out the reaction 3-O-[beta-D-GlcA-(1-&gt;3)-beta-D-Xyl-(1-&gt;4)-Rib-ol-P-Rib-ol-P-3-beta-D-GalNAc-(1-&gt;3)-beta-D-GlcNAc-(1-&gt;4)-(O-6-P-alpha-D-Man)]-Thr-[protein] + UDP-alpha-D-xylose = 3-O-[alpha-D-Xyl-(1-&gt;3)-beta-D-GlcA-(1-&gt;4)-beta-D-Xyl-(1-&gt;4)-Rib-ol-P-Rib-ol-P-3-beta-D-GalNAc-(1-&gt;3)-beta-D-GlcNAc-(1-&gt;4)-(O-6-P-alpha-D-Man)]-Thr-[protein] + UDP + H(+). The enzyme catalyses 3-O-{(1-&gt;[3)-alpha-D-Xyl-(1-&gt;3)-beta-D-GlcA-(1-&gt;](n)-4)-beta-D-Xyl-(1-&gt;4)-Rib-ol-P-Rib-ol-P-3-beta-D-GalNAc-(1-&gt;3)-beta-D-GlcNAc-(1-&gt;4)-O-6-P-alpha-D-Man}-L-Thr-[protein] + UDP-alpha-D-glucuronate = 3-O-{beta-D-GlcA-(1-&gt;[3)-alpha-D-Xyl-(1-&gt;3)-beta-D-GlcA-(1-&gt;](n)-4)-beta-D-Xyl-(1-&gt;4)-Rib-ol-P-Rib-ol-P-3-beta-D-GalNAc-(1-&gt;3)-beta-D-GlcNAc-(1-&gt;4)-O-6-P-alpha-D-Man}-L-Thr-[protein] + UDP + H(+). It catalyses the reaction 3-O-{beta-D-GlcA-(1-&gt;[3)-alpha-D-Xyl-(1-&gt;3)-beta-D-GlcA-(1-&gt;](n)-4)-beta-D-Xyl-(1-&gt;4)-Rib-ol-P-Rib-ol-P-3-beta-D-GalNAc-(1-&gt;3)-beta-D-GlcNAc-(1-&gt;4)-O-6-P-alpha-D-Man}-L-Thr-[protein] + UDP-alpha-D-xylose = 3-O-{(1-&gt;[3)-alpha-D-Xyl-(1-&gt;3)-beta-D-GlcA-(1-&gt;](n+1)-4)-beta-D-Xyl-(1-&gt;4)-Rib-ol-P-Rib-ol-P-3-beta-D-GalNAc-(1-&gt;3)-beta-D-GlcNAc-(1-&gt;4)-O-6-P-alpha-D-Man}-L-Thr-[protein] + UDP + H(+). The protein operates within protein modification; protein glycosylation. Bifunctional glycosyltransferase with both alpha-1,3-xylosyltransferase and beta-1,3-glucuronyltransferase activities involved in the maturation of alpha-dystroglycan (DAG1) by glycosylation leading to DAG1 binding to laminin G-like domain-containing extracellular proteins with high affinity. Elongates the glucuronyl-beta-1,4-xylose-beta disaccharide primer structure initiated by B4GAT1 by adding repeating units [-3-Xylose-alpha-1,3-GlcA-beta-1-] to produce a heteropolysaccharide. Requires the phosphorylation of core M3 (O-mannosyl trisaccharide) by POMK to elongate the glucuronyl-beta-1,4-xylose-beta disaccharide primer. Plays a key role in skeletal muscle function and regeneration. This Danio rerio (Zebrafish) protein is Xylosyl- and glucuronyltransferase LARGE1.